Here is a 278-residue protein sequence, read N- to C-terminus: SPX domain-containing protein 2 (278 aa).

An SPX domain is found at 1 to 162 (MKFGKSLSSQ…GSMIRLPFVQ (162 aa)). Disordered stretches follow at residues 191 to 242 (PTNE…KSTV) and 255 to 278 (GSST…EPGR).

In terms of assembly, interacts (via SPX domain) with PHR2 (via C-terminus). Interacts with RLI1 in the nucleus to prevents its positive regulation of leaf inclination during phosphate (Pi) starvation.

It is found in the nucleus. Its function is as follows. Inhibits PHR2 DNA-binding activity via a phosphate (Pi)-dependent protein interaction. Together with SPX1, plays a negative role in the regulation of leaf inclination by preventing RLI1 transcription factor activity in Pi depleted conditions. This Oryza sativa subsp. indica (Rice) protein is SPX domain-containing protein 2.